The following is a 66-amino-acid chain: MKEKIHPNYQEVEVKCVCGNTFKTGSTKKEIKVEICSNCHPFYTGAQRQIEVGGRAEKFRKKYGLK.

4 residues coordinate Zn(2+): Cys-16, Cys-18, Cys-36, and Cys-39.

The protein belongs to the bacterial ribosomal protein bL31 family. Type A subfamily. Part of the 50S ribosomal subunit. The cofactor is Zn(2+).

Binds the 23S rRNA. In Desulforamulus reducens (strain ATCC BAA-1160 / DSM 100696 / MI-1) (Desulfotomaculum reducens), this protein is Large ribosomal subunit protein bL31.